The chain runs to 841 residues: mRNA export factor ICP27 homolog (841 aa).

2 disordered regions span residues 12–82 (PFAG…QYDK) and 115–163 (RAQG…TSPD). A compositionally biased stretch (low complexity) spans 32–49 (YSQQQSQHYYYGHNQSSY). Over residues 66–79 (MPPPLSSPSSPPPQ) the composition is skewed to pro residues. Residues 132 to 147 (SSLVSSNNSNNNTTLS) are compositionally biased toward low complexity. Residues cysteine 298, histidine 411, cysteine 413, and cysteine 418 each contribute to the Zn(2+) site. A CHC2-type zinc finger spans residues 298-418 (CLLDSPGGGG…PGHRCQNEIC (121 aa)). 2 disordered regions span residues 444-749 (HPNG…DDLH) and 774-811 (SVTP…TDQP). Residues 495–507 (VDSRGGGGDRRGD) are compositionally biased toward basic and acidic residues. Residues 514–526 (NHHRHHTRRARTR) are compositionally biased toward basic residues. The segment covering 553–563 (RRGEAQRESNG) has biased composition (basic and acidic residues). Composition is skewed to low complexity over residues 568–579 (KSPSTVSSTTVH) and 591–603 (SRKS…QPET). Residues 614–623 (MPPPPSPCSP) show a composition bias toward pro residues. The segment covering 641–657 (RPHDPPSGEPADAEKEL) has biased composition (basic and acidic residues). A compositionally biased stretch (low complexity) spans 688–699 (DSSSSSSDSSSS). The span at 708-731 (EDCRELDLQSKRLEEALEERCERD) shows a compositional bias: basic and acidic residues. 2 stretches are compositionally biased toward acidic residues: residues 732–749 (FEAD…DDLH) and 793–809 (DAEE…DETD).

Belongs to the HHV-1 ICP27 protein family.

The protein resides in the virion tegument. It localises to the virion. The protein localises to the host nucleus. Its subcellular location is the host cytoplasm. Its function is as follows. Immediate early (EI) protein that plays many roles during productive infection including regulation of viral gene expression and nuclear export of intronless viral RNAs. The polypeptide is mRNA export factor ICP27 homolog (Mus musculus (Mouse)).